We begin with the raw amino-acid sequence, 74 residues long: UPF0154 protein OB1676 (74 aa).

The helical transmembrane segment at 4 to 24 threads the bilayer; that stretch reads IWVVLIAIAALVAGVALGFFI.

The protein belongs to the UPF0154 family.

The protein resides in the membrane. This Oceanobacillus iheyensis (strain DSM 14371 / CIP 107618 / JCM 11309 / KCTC 3954 / HTE831) protein is UPF0154 protein OB1676.